Reading from the N-terminus, the 747-residue chain is MNLKTKFFLKVISVIAPIVIIPTILANCAHINSNELDNAKTNLKGSVEVVNINPYKTKQMLASNINKEQINSYFIFIFNLIKTNQKIEEKILDKNDYEILNWAANDNDGTLGINIYIKTTKQSYLINTKPVFLTDKQNNYLQELKYKTPAVYSIDEILKFSNNPYNLIHNNPYYREQLLRAKIYFNQNEANVDDSKLYMNKIGYSEFGSDVQKRLENAFKIRYDEQNIYQINSPQILAKETKTLTSYIDKKTNNNYSINIELIKKLIQINPFGKLPKNFAQLINLIKKEEYPKFLTITKNESVDNIVVKDIYYRIIDRYAKLEFILEIYNKKTKQTVYLSANFNQKNSGLLKNEDYFQYIFDRTISLDLLTTKDGKNVELNSGTGWIVDRIIDDSLPKNKIKLLIATNNHVMGWSNLAISKDNRMKSRWFNKQEYINYLENNAGFISSNIYEDKDRYQYLLWGTAPLKSPVSNKYNSLSGISFSNLAKVYNITNQNFINRAWYIPQLSANGIKINENLRTWYQINQEDIKSIKNGTLDFVLVPMVFDIEDIKEKLPNYYKVLNTKDEANWYIGLGNSKKYLPQLQLFSGGYPGDVNPNSSAIVSWRGSKSYGSLIQAFDREIKNESILDYYGPKQINNIDGYQKVGEGYLNKLFNVGTRVITSDEIGDLGSGSSGSMIIDSNFNLVGIHFASLNSRAYGAPNDSMIGNLFVAQSQDLSGDIDVRAAVIKKLKAENIYTYKLNPKVSS.

The helical transmembrane segment at 7–27 (FFLKVISVIAPIVIIPTILAN) threads the bilayer.

Its subcellular location is the membrane. This is an uncharacterized protein from Ureaplasma parvum serovar 3 (strain ATCC 700970).